We begin with the raw amino-acid sequence, 128 residues long: UPF0325 protein PMI2289 (128 aa).

It belongs to the UPF0325 family.

The chain is UPF0325 protein PMI2289 from Proteus mirabilis (strain HI4320).